A 466-amino-acid chain; its full sequence is Argininosuccinate lyase (466 aa).

It belongs to the lyase 1 family. Argininosuccinate lyase subfamily.

The protein resides in the cytoplasm. The enzyme catalyses 2-(N(omega)-L-arginino)succinate = fumarate + L-arginine. Its pathway is amino-acid biosynthesis; L-arginine biosynthesis; L-arginine from L-ornithine and carbamoyl phosphate: step 3/3. In Synechococcus elongatus (strain ATCC 33912 / PCC 7942 / FACHB-805) (Anacystis nidulans R2), this protein is Argininosuccinate lyase.